Here is an 87-residue protein sequence, read N- to C-terminus: Guanine nucleotide-binding protein subunit gamma (87 aa).

Cys84 bears the Cysteine methyl ester mark. The S-geranylgeranyl cysteine moiety is linked to residue Cys84. Residues 85–87 (LLV) constitute a propeptide, removed in mature form.

Belongs to the G protein gamma family. In terms of assembly, g proteins are composed of 3 units, alpha, beta and gamma. Post-translationally, the N-terminus is blocked.

Its subcellular location is the cell membrane. Its function is as follows. Guanine nucleotide-binding proteins (G proteins) are involved as a modulator or transducer in various transmembrane signaling systems. This major G-protein of the squid photoreceptor is involved in visual transduction. The beta and gamma chains are required for the GTPase activity, for replacement of GDP by GTP, and for G protein-effector interaction. The sequence is that of Guanine nucleotide-binding protein subunit gamma from Loligo forbesii (Veined squid).